Consider the following 70-residue polypeptide: Turripeptide Ici9.2 (70 aa).

The signal sequence occupies residues 1–20 (MKVYCLLLVLLVGLVSQAQG). In terms of domain architecture, Kazal-like spans 21–70 (QLDKKCQTMCTMEYLPVCGSDGTTYPNKCTLTSTACVNQMDITVLHNGEC). Disulfide bonds link C26-C56, C30-C49, and C38-C70.

This sequence belongs to the conopeptide P-like superfamily. In terms of tissue distribution, expressed by the venom duct.

The protein localises to the secreted. In terms of biological role, acts as a neurotoxin by inhibiting an ion channel. May also act as a serine protease inhibitor, since it possess the kazal serine protease inhibitor signature. This Iotyrris cingulifera (Sea snail) protein is Turripeptide Ici9.2.